The sequence spans 303 residues: MDDFSSISLLSLAMLVGCYVSGIIPLAVNFSEEKLKLVTVLGAGLLCGTALAVIVPEGVHALYEEVLEAKHHDMGDIHKAKDAETGAEISAAHEHDHSNLHAYIGVSLVLGFVFMLLVDQIGSSHMHSADDPEAARAASSKITTTLGLVVHAAADGVALGAAASTSQTSVQLIVFVAIMLHKAPAAFGLVSFLMHAGLERNRIRKHLLVFALAAPVLSMLTYLGLSKSSKEALSEVNATGVAMLFSAGTFLYVATVHVLPEVGGMGHSHKPEVGATKGLSRLEVCALVLGCLIPLVLSIGHQH.

Residues 7–27 traverse the membrane as a helical segment; the sequence is ISLLSLAMLVGCYVSGIIPLA. A glycan (N-linked (GlcNAc...) asparagine) is linked at asparagine 29. 5 consecutive transmembrane segments (helical) span residues 35-55, 102-122, 142-162, 172-192, and 206-226; these read LKLVTVLGAGLLCGTALAVIV, AYIGVSLVLGFVFMLLVDQIG, ITTTLGLVVHAAADGVALGAA, LIVFVAIMLHKAPAAFGLVSF, and HLLVFALAAPVLSMLTYLGLS. N-linked (GlcNAc...) asparagine glycosylation occurs at asparagine 237. The next 2 membrane-spanning stretches (helical) occupy residues 240-260 and 282-302; these read GVAMLFSAGTFLYVATVHVLP and LEVCALVLGCLIPLVLSIGHQ.

Belongs to the ZIP transporter (TC 2.A.5) family.

The protein resides in the golgi apparatus. Its subcellular location is the trans-Golgi network membrane. It is found in the cell membrane. It localises to the cytoplasm. The protein localises to the perinuclear region. The protein resides in the mitochondrion. Its subcellular location is the nucleus. It carries out the reaction Zn(2+)(in) = Zn(2+)(out). In terms of biological role, transports zinc ions across cell and organelle membranes into the cytoplasm and regulates intracellular zinc homeostasis. Participates in the zinc ions efflux out of the secretory compartments. Also functions as a membrane androgen receptor that mediates, through a G protein, the non-classical androgen signaling pathway, characterized by the activation of MAPK3/MAPK1 (Erk1/2) and transcription factors CREB1 or ATF1. Moreover, has dual functions as a membrane-bound androgen receptor and as an androgen-dependent zinc transporter both of which are mediated through an inhibitory G protein (Gi) that mediates both MAP kinase and zinc signaling leading to the androgen-dependent apoptotic process. This is Zinc transporter ZIP9 from Xenopus tropicalis (Western clawed frog).